Reading from the N-terminus, the 329-residue chain is Ketol-acid reductoisomerase (NADP(+)) (329 aa).

One can recognise a KARI N-terminal Rossmann domain in the interval 2–181 (VQKYYESDAD…GATRAVVFET (180 aa)). Residues 25–28 (YGSQ), R48, S52, and 82–85 (DENQ) contribute to the NADP(+) site. H107 is a catalytic residue. G133 is a binding site for NADP(+). The region spanning 182 to 327 (TFAEETETDL…AEIRGFMPQF (146 aa)) is the KARI C-terminal knotted domain. 4 residues coordinate Mg(2+): D190, E194, E226, and E230. Position 251 (S251) interacts with substrate.

This sequence belongs to the ketol-acid reductoisomerase family. Mg(2+) serves as cofactor.

It catalyses the reaction (2R)-2,3-dihydroxy-3-methylbutanoate + NADP(+) = (2S)-2-acetolactate + NADPH + H(+). The enzyme catalyses (2R,3R)-2,3-dihydroxy-3-methylpentanoate + NADP(+) = (S)-2-ethyl-2-hydroxy-3-oxobutanoate + NADPH + H(+). It functions in the pathway amino-acid biosynthesis; L-isoleucine biosynthesis; L-isoleucine from 2-oxobutanoate: step 2/4. Its pathway is amino-acid biosynthesis; L-valine biosynthesis; L-valine from pyruvate: step 2/4. Its function is as follows. Involved in the biosynthesis of branched-chain amino acids (BCAA). Catalyzes an alkyl-migration followed by a ketol-acid reduction of (S)-2-acetolactate (S2AL) to yield (R)-2,3-dihydroxy-isovalerate. In the isomerase reaction, S2AL is rearranged via a Mg-dependent methyl migration to produce 3-hydroxy-3-methyl-2-ketobutyrate (HMKB). In the reductase reaction, this 2-ketoacid undergoes a metal-dependent reduction by NADPH to yield (R)-2,3-dihydroxy-isovalerate. The chain is Ketol-acid reductoisomerase (NADP(+)) from Methanoculleus marisnigri (strain ATCC 35101 / DSM 1498 / JR1).